We begin with the raw amino-acid sequence, 365 residues long: 2-aminoethylphosphonate--pyruvate transaminase (365 aa).

Lys-194 bears the N6-(pyridoxal phosphate)lysine mark.

It belongs to the class-V pyridoxal-phosphate-dependent aminotransferase family. PhnW subfamily. As to quaternary structure, homodimer. Pyridoxal 5'-phosphate is required as a cofactor.

It carries out the reaction (2-aminoethyl)phosphonate + pyruvate = phosphonoacetaldehyde + L-alanine. Functionally, involved in phosphonate degradation. This chain is 2-aminoethylphosphonate--pyruvate transaminase, found in Bacillus thuringiensis subsp. konkukian (strain 97-27).